A 528-amino-acid chain; its full sequence is Propionate catabolism operon regulatory protein (528 aa).

One can recognise a Sigma-54 factor interaction domain in the interval 218–461 (MLGQSPQMEQ…RNMMERLALF (244 aa)). Position 318–327 (318–327 (AHGGTLFLDE)) interacts with ATP. The segment at residues 508 to 527 (KTAAANYLGISRTTFWRRLK) is a DNA-binding region (H-T-H motif).

Its function is as follows. Involved in the transcriptional regulation of the propionate catabolism operon. In Escherichia coli (strain K12), this protein is Propionate catabolism operon regulatory protein (prpR).